A 175-amino-acid chain; its full sequence is Large ribosomal subunit protein bL9 (175 aa).

Belongs to the bacterial ribosomal protein bL9 family.

In terms of biological role, binds to the 23S rRNA. This Orientia tsutsugamushi (strain Boryong) (Rickettsia tsutsugamushi) protein is Large ribosomal subunit protein bL9.